We begin with the raw amino-acid sequence, 425 residues long: Testicular acid phosphatase (425 aa).

An N-terminal signal peptide occupies residues 1–27 (MAEPGSQGHTVGPLLLLLLLLLPRALP). Residues 28 to 392 (EGPLLFVALV…EPASPPATVP (365 aa)) lie on the Extracellular side of the membrane. The active-site Nucleophile is the H40. 3 disulfides stabilise this stretch: C158/C378, C213/C311, and C353/C357. D288 functions as the Proton donor in the catalytic mechanism. Residues 393–413 (LLAGAVAVLAVLSLGLGLLAW) form a helical membrane-spanning segment. Over 414–425 (RPRCLRALGGTV) the chain is Cytoplasmic.

This sequence belongs to the histidine acid phosphatase family. In terms of assembly, homodimer. In terms of processing, glycosylated.

Its subcellular location is the membrane. The catalysed reaction is a phosphate monoester + H2O = an alcohol + phosphate. Its function is as follows. May dephosphorylate receptor tyrosine-protein kinase ERBB4 and inhibits its ligand-induced proteolytic cleavage. May play a role in odontogenesis. The polypeptide is Testicular acid phosphatase (Mus musculus (Mouse)).